Reading from the N-terminus, the 4114-residue chain is Ferrichrome siderophore peptide synthetase (4114 aa).

Carrier domains follow at residues 797-874 (DPAT…QSSG), 1947-2021 (TDSE…IDKL), 3020-3093 (TQSE…MQSS), and 3574-3650 (QALS…SQTN). O-(pantetheine 4'-phosphoryl)serine is present on residues Ser-835, Ser-1982, Ser-3054, and Ser-3611. The tract at residues 4040–4061 (LDYSHHSQHSTHDRTPPSTPHV) is disordered. Residues 4041–4054 (DYSHHSQHSTHDRT) show a composition bias toward basic and acidic residues.

The protein belongs to the ATP-dependent AMP-binding enzyme family. It depends on pantetheine 4'-phosphate as a cofactor.

The protein operates within siderophore biosynthesis; ferrichrome biosynthesis. Functionally, multidomain peptide synthetase involved in ferrichrome biosynthesis. In Mycosarcoma maydis (Corn smut fungus), this protein is Ferrichrome siderophore peptide synthetase (SID2).